The chain runs to 149 residues: Transcriptional repressor NrdR (149 aa).

A zinc finger lies at 3 to 34 (CPFCSATDTKVIDSRLVSDGHQVRRRRQCLAC). The region spanning 49–139 (PKVIKSNGNR…VYRSFEDIKE (91 aa)) is the ATP-cone domain.

This sequence belongs to the NrdR family. Zn(2+) is required as a cofactor.

Its function is as follows. Negatively regulates transcription of bacterial ribonucleotide reductase nrd genes and operons by binding to NrdR-boxes. The chain is Transcriptional repressor NrdR from Aliivibrio salmonicida (strain LFI1238) (Vibrio salmonicida (strain LFI1238)).